The following is a 247-amino-acid chain: Triosephosphate isomerase (247 aa).

Residues Asn-10 and Lys-12 each coordinate substrate. His-94 (electrophile) is an active-site residue. The Proton acceptor role is filled by Glu-164.

The protein belongs to the triosephosphate isomerase family. In terms of assembly, homodimer.

The enzyme catalyses D-glyceraldehyde 3-phosphate = dihydroxyacetone phosphate. It participates in carbohydrate biosynthesis; gluconeogenesis. Its pathway is carbohydrate degradation; glycolysis; D-glyceraldehyde 3-phosphate from glycerone phosphate: step 1/1. This is Triosephosphate isomerase (Tpi) from Culex tarsalis (Encephalitis mosquito).